The following is a 364-amino-acid chain: UDP-N-acetylglucosamine--N-acetylmuramyl-(pentapeptide) pyrophosphoryl-undecaprenol N-acetylglucosamine transferase (364 aa).

Residues 15–17, N123, R164, S191, and Q286 contribute to the UDP-N-acetyl-alpha-D-glucosamine site; that span reads TGG.

Belongs to the glycosyltransferase 28 family. MurG subfamily.

Its subcellular location is the cell inner membrane. The catalysed reaction is di-trans,octa-cis-undecaprenyl diphospho-N-acetyl-alpha-D-muramoyl-L-alanyl-D-glutamyl-meso-2,6-diaminopimeloyl-D-alanyl-D-alanine + UDP-N-acetyl-alpha-D-glucosamine = di-trans,octa-cis-undecaprenyl diphospho-[N-acetyl-alpha-D-glucosaminyl-(1-&gt;4)]-N-acetyl-alpha-D-muramoyl-L-alanyl-D-glutamyl-meso-2,6-diaminopimeloyl-D-alanyl-D-alanine + UDP + H(+). Its pathway is cell wall biogenesis; peptidoglycan biosynthesis. Its function is as follows. Cell wall formation. Catalyzes the transfer of a GlcNAc subunit on undecaprenyl-pyrophosphoryl-MurNAc-pentapeptide (lipid intermediate I) to form undecaprenyl-pyrophosphoryl-MurNAc-(pentapeptide)GlcNAc (lipid intermediate II). This Prochlorococcus marinus subsp. pastoris (strain CCMP1986 / NIES-2087 / MED4) protein is UDP-N-acetylglucosamine--N-acetylmuramyl-(pentapeptide) pyrophosphoryl-undecaprenol N-acetylglucosamine transferase.